Reading from the N-terminus, the 155-residue chain is Small ribosomal subunit protein uS7 (155 aa).

The protein belongs to the universal ribosomal protein uS7 family. In terms of assembly, part of the 30S ribosomal subunit. Contacts proteins S9 and S11.

Functionally, one of the primary rRNA binding proteins, it binds directly to 16S rRNA where it nucleates assembly of the head domain of the 30S subunit. Is located at the subunit interface close to the decoding center, probably blocks exit of the E-site tRNA. The polypeptide is Small ribosomal subunit protein uS7 (Nautilia profundicola (strain ATCC BAA-1463 / DSM 18972 / AmH)).